The following is a 309-amino-acid chain: Probable manganese-dependent inorganic pyrophosphatase (309 aa).

The Mn(2+) site is built by histidine 9, aspartate 13, aspartate 15, aspartate 75, histidine 97, and aspartate 149.

The protein belongs to the PPase class C family. Mn(2+) is required as a cofactor.

It is found in the cytoplasm. The enzyme catalyses diphosphate + H2O = 2 phosphate + H(+). In Staphylococcus epidermidis (strain ATCC 35984 / DSM 28319 / BCRC 17069 / CCUG 31568 / BM 3577 / RP62A), this protein is Probable manganese-dependent inorganic pyrophosphatase.